The chain runs to 163 residues: Transcriptional repressor NrdR (163 aa).

A zinc finger lies at Cys3–Cys34. The region spanning Pro49–Ala139 is the ATP-cone domain.

This sequence belongs to the NrdR family. It depends on Zn(2+) as a cofactor.

Its function is as follows. Negatively regulates transcription of bacterial ribonucleotide reductase nrd genes and operons by binding to NrdR-boxes. This is Transcriptional repressor NrdR from Acidithiobacillus ferrooxidans (strain ATCC 23270 / DSM 14882 / CIP 104768 / NCIMB 8455) (Ferrobacillus ferrooxidans (strain ATCC 23270)).